We begin with the raw amino-acid sequence, 280 residues long: Lysosome-associated membrane glycoprotein 5 (280 aa).

The signal sequence occupies residues M1–A29. Residues E30–E235 are Extracellular-facing. Residues N35, N53, and N127 are each glycosylated (N-linked (GlcNAc...) asparagine). The chain crosses the membrane as a helical span at residues T236–Y256. The Cytoplasmic portion of the chain corresponds to H257–G280.

Belongs to the LAMP family. In terms of processing, glycosylated. As to expression, expressed in plasmocytoid dendritic cells. Expressed in suprabasal skin keratinocytes and squamous cells (at protein level). Expressed in the brain and weakly in spleen and skin. Expressed in plasmocytoid dendritic cells.

The protein localises to the cell membrane. It localises to the cytoplasmic vesicle. It is found in the secretory vesicle. Its subcellular location is the synaptic vesicle membrane. The protein resides in the endoplasmic reticulum-Golgi intermediate compartment membrane. The protein localises to the endosome membrane. It localises to the cytoplasmic vesicle membrane. It is found in the cell projection. Its subcellular location is the dendrite. The protein resides in the growth cone membrane. The protein localises to the early endosome membrane. It localises to the recycling endosome. Functionally, plays a role in short-term synaptic plasticity in a subset of GABAergic neurons in the brain. In Homo sapiens (Human), this protein is Lysosome-associated membrane glycoprotein 5 (LAMP5).